The chain runs to 156 residues: Acyl carrier protein, mitochondrial (156 aa).

Residues 1–68 constitute a mitochondrion transit peptide; that stretch reads MASRVLCACV…GTVTHLCRQY (68 aa). A Carrier domain is found at 77 to 152; that stretch reads DGIKDRVLYV…EIVDYIADKK (76 aa). Position 88 is an N6-acetyllysine (Lys88). Ser112 carries the post-translational modification O-(pantetheine 4'-phosphoryl)serine.

It belongs to the acyl carrier protein (ACP) family. In terms of assembly, mammalian complex I is composed of 45 different subunits. Interacts with ETFRF1. Identified in a complex composed of MALSU1, MIEF1 upstream open reading frame protein and NDUFAB1; within the trimeric complex, MIEF1 upstream open reading frame protein functions as a bridging scaffold that interacts with MALSU1 on one side, and with NDUFAB1 on the other side. The complex interacts with the mitochondrial large ribosomal subunit. Interacts with alpha-1-microglobulin chain; this interaction is required for the maintenance of mitochondrial redox homeostasis. Component of the mitochondrial core iron-sulfur cluster (ISC) complex composed of NFS1, LYRM4, NDUFAB1, ISCU, FXN, and FDX2; this complex is a heterohexamer containing two copies of each monomer. Component of the cyteine desulfurase complex composed of NFS1, LYRM4 and NDUFAB1; this complex contributes to the stability and cysteine desulfurase activity of NFS1. In terms of processing, phosphopantetheinylation at Ser-112 is essential for interactions with LYR motif-containing proteins.

Its subcellular location is the mitochondrion. In terms of biological role, carrier of the growing fatty acid chain in fatty acid biosynthesis. Accessory and non-catalytic subunit of the mitochondrial membrane respiratory chain NADH dehydrogenase (Complex I), which functions in the transfer of electrons from NADH to the respiratory chain. Accessory protein, of the core iron-sulfur cluster (ISC) assembly complex, that regulates, in association with LYRM4, the stability and the cysteine desulfurase activity of NFS1 and participates in the [2Fe-2S] clusters assembly on the scaffolding protein ISCU. The core iron-sulfur cluster (ISC) assembly complex is involved in the de novo synthesis of a [2Fe-2S] cluster, the first step of the mitochondrial iron-sulfur protein biogenesis. This process is initiated by the cysteine desulfurase complex (NFS1:LYRM4:NDUFAB1) that produces persulfide which is delivered on the scaffold protein ISCU in a FXN-dependent manner. Then this complex is stabilized by FDX2 which provides reducing equivalents to accomplish the [2Fe-2S] cluster assembly. Finally, the [2Fe-2S] cluster is transferred from ISCU to chaperone proteins, including HSCB, HSPA9 and GLRX5. The chain is Acyl carrier protein, mitochondrial from Mus musculus (Mouse).